Consider the following 37-residue polypeptide: Large ribosomal subunit protein bL36 (37 aa).

Belongs to the bacterial ribosomal protein bL36 family.

This is Large ribosomal subunit protein bL36 from Natranaerobius thermophilus (strain ATCC BAA-1301 / DSM 18059 / JW/NM-WN-LF).